The following is a 159-amino-acid chain: Ribonuclease H (159 aa).

The RNase H type-1 domain maps to 10 to 153 (TQTQVVIYTD…ADALANQGVE (144 aa)). Mg(2+)-binding residues include D19, E57, D79, and D145.

The protein belongs to the RNase H family. Monomer. It depends on Mg(2+) as a cofactor.

The protein localises to the cytoplasm. It carries out the reaction Endonucleolytic cleavage to 5'-phosphomonoester.. Endonuclease that specifically degrades the RNA of RNA-DNA hybrids. The polypeptide is Ribonuclease H (Polaromonas sp. (strain JS666 / ATCC BAA-500)).